The chain runs to 108 residues: UPF0060 membrane protein YnfA (108 aa).

At 1–5 the chain is on the periplasmic side; that stretch reads MFKTT. Residues 6–26 traverse the membrane as a helical segment; that stretch reads LLFFITALCEIIGCFLPWLWL. Residues 27–30 are Cytoplasmic-facing; it reads KRNG. The helical transmembrane segment at 31–51 threads the bilayer; the sequence is SIWLLLPAGVSLAFFVWLLTL. The Periplasmic portion of the chain corresponds to 52-60; it reads HPAASGRVY. A helical membrane pass occupies residues 61–81; the sequence is AAYGGVYVCTALLWLRFIDGV. The Cytoplasmic portion of the chain corresponds to 82-84; that stretch reads KLS. A helical membrane pass occupies residues 85-105; sequence LYDWSGALIALCGMLIIVAGW. At 106-108 the chain is on the periplasmic side; the sequence is GRA.

This sequence belongs to the UPF0060 family.

It localises to the cell inner membrane. The sequence is that of UPF0060 membrane protein YnfA from Escherichia fergusonii (strain ATCC 35469 / DSM 13698 / CCUG 18766 / IAM 14443 / JCM 21226 / LMG 7866 / NBRC 102419 / NCTC 12128 / CDC 0568-73).